We begin with the raw amino-acid sequence, 338 residues long: MPSQEVSVNKVIVHPLVLLSVVDHFNRMGKIGNQKRVVGVLLGCWRSKGVLDVSNSFAVPFDEDDKDKSVWFLDHDYLENMYGMFKKVNARERVVGWYHTGPKLHQNDIAINELVRRYCPNSVLVIIDAKPKDLGLPTEAYISVEEVHDDGSPTSKTFEHVPSEIGAEEAEEVGVEHLLRDIKDTTVGSLSQKITNQLMGLKGLNAQLRDIKQYLQRVGDSKMPINHQIVYQLQDIFNLLPDITNDQFTGTMYVKTNDQMLVVYLASMVRSIIALHNLINNKLANRDAEEGKSDSKEAKEKNKDSKDKDNKETKDKDGKKAEEKADKGKDEGGKGSRK.

One can recognise an MPN domain in the interval 11 to 147 (VIVHPLVLLS…TEAYISVEEV (137 aa)). The segment at 286–338 (RDAEEGKSDSKEAKEKNKDSKDKDNKETKDKDGKKAEEKADKGKDEGGKGSRK) is disordered.

Belongs to the peptidase M67A family.

Functionally, acts as a regulatory subunit of the 26S proteasome which is involved in the ATP-dependent degradation of ubiquitinated proteins. This Drosophila melanogaster (Fruit fly) protein is 26S proteasome non-ATPase regulatory subunit 7 (Rpn8).